A 478-amino-acid chain; its full sequence is Succinyl-CoA:acetate/propanoyl-CoA:succinate CoA transferase (478 aa).

Residues Met-1–Gln-30 constitute a mitochondrion transit peptide. Gly-256 to Ile-260 lines the CoA pocket. Catalysis depends on Glu-279, which acts as the 5-glutamyl coenzyme A thioester intermediate. Residues Ile-354, Gly-377, and Lys-404 each coordinate CoA.

This sequence belongs to the acetyl-CoA hydrolase/transferase family.

It is found in the mitochondrion. It catalyses the reaction succinyl-CoA + acetate = succinate + acetyl-CoA. It carries out the reaction propanoyl-CoA + succinate = propanoate + succinyl-CoA. Its function is as follows. Transferase involved in anaerobic fumarate-respiration in the mitochondria. Catalyzes the transfer of the CoA moiety of acetyl-CoA or propionyl-CoA to succinate, thereby forming acetate and propionate, respectively. Acetate and propionate are the two major metabolic end products in the anaerobic mitochondrial metabolism of F.hepatica. Also displays CoA transferase activities from acetyl-CoA to propionate, acetate and butyrate. In Fasciola hepatica (Liver fluke), this protein is Succinyl-CoA:acetate/propanoyl-CoA:succinate CoA transferase.